The sequence spans 357 residues: Protein RecA (357 aa).

Position 79 to 86 (79 to 86 (GPESSGKT)) interacts with ATP.

The protein belongs to the RecA family.

Its subcellular location is the cytoplasm. In terms of biological role, can catalyze the hydrolysis of ATP in the presence of single-stranded DNA, the ATP-dependent uptake of single-stranded DNA by duplex DNA, and the ATP-dependent hybridization of homologous single-stranded DNAs. It interacts with LexA causing its activation and leading to its autocatalytic cleavage. In Chloroherpeton thalassium (strain ATCC 35110 / GB-78), this protein is Protein RecA.